Here is a 335-residue protein sequence, read N- to C-terminus: (+)-caryolan-1-ol synthase (335 aa).

Positions 83, 87, 220, 224, and 228 each coordinate Mg(2+). Positions 83–87 match the DDXXD motif motif; the sequence is DDEFD. Residues 220–228 carry the NSE/DTE motif motif; that stretch reads NDICSFEKE.

This sequence belongs to the terpene synthase family. Mg(2+) serves as cofactor. The cofactor is Mn(2+).

It carries out the reaction (2E,6E)-farnesyl diphosphate = (+)-(E)-beta-caryophyllene + diphosphate. The enzyme catalyses (+)-(E)-beta-caryophyllene + H2O = (+)-caryolan-1-ol. It functions in the pathway secondary metabolite biosynthesis; terpenoid biosynthesis. Functionally, sesquiterpene cyclase that first catalyzes the cyclization of farnesyl diphosphate (FPP) to the bicyclic sesquiterpene (+)-beta-caryophyllene intermediate, and then its conversion to (+)-caryolan-1-ol via a second cyclization and the addition of a water molecule. This chain is (+)-caryolan-1-ol synthase (gcoA), found in Streptomyces griseus subsp. griseus (strain JCM 4626 / CBS 651.72 / NBRC 13350 / KCC S-0626 / ISP 5235).